The chain runs to 476 residues: Chromosomal replication initiator protein DnaA (476 aa).

The segment at 1 to 73 is domain I, interacts with DnaA modulators; sequence MTNSEQERWS…LSAWQAEMPE (73 aa). The segment at 73–132 is domain II; that stretch reads EVHRIDLSVRTAMRCATPAKEAPAAVEARRPERSDAKPVSDARAPVMTPVAASHDALGGS. The disordered stretch occupies residues 92–115; sequence KEAPAAVEARRPERSDAKPVSDAR. Residues 99-112 show a composition bias toward basic and acidic residues; the sequence is EARRPERSDAKPVS. The segment at 133 to 355 is domain III, AAA+ region; that stretch reads PLDPRLTFAS…GAINRLLAHS (223 aa). The ATP site is built by glycine 180, glycine 182, lysine 183, and threonine 184. The tract at residues 356-476 is domain IV, binds dsDNA; sequence KLNNQPVTLD…VESLKRQLQD (121 aa).

Belongs to the DnaA family. Oligomerizes as a right-handed, spiral filament on DNA at oriC.

It localises to the cytoplasm. Its function is as follows. Plays an essential role in the initiation and regulation of chromosomal replication. ATP-DnaA binds to the origin of replication (oriC) to initiate formation of the DNA replication initiation complex once per cell cycle. Binds the DnaA box (a 9 base pair repeat at the origin) and separates the double-stranded (ds)DNA. Forms a right-handed helical filament on oriC DNA; dsDNA binds to the exterior of the filament while single-stranded (ss)DNA is stabiized in the filament's interior. The ATP-DnaA-oriC complex binds and stabilizes one strand of the AT-rich DNA unwinding element (DUE), permitting loading of DNA polymerase. After initiation quickly degrades to an ADP-DnaA complex that is not apt for DNA replication. Binds acidic phospholipids. The polypeptide is Chromosomal replication initiator protein DnaA (Bradyrhizobium sp. (strain ORS 278)).